The sequence spans 235 residues: Large ribosomal subunit protein uL1 (235 aa).

The protein belongs to the universal ribosomal protein uL1 family. In terms of assembly, part of the 50S ribosomal subunit.

Binds directly to 23S rRNA. The L1 stalk is quite mobile in the ribosome, and is involved in E site tRNA release. In terms of biological role, protein L1 is also a translational repressor protein, it controls the translation of the L11 operon by binding to its mRNA. This chain is Large ribosomal subunit protein uL1, found in Methylobacterium sp. (strain 4-46).